Here is a 298-residue protein sequence, read N- to C-terminus: Acetylglutamate kinase (298 aa).

Substrate-binding positions include 69-70 (GG), R91, and N196.

The protein belongs to the acetylglutamate kinase family. ArgB subfamily.

It localises to the cytoplasm. The enzyme catalyses N-acetyl-L-glutamate + ATP = N-acetyl-L-glutamyl 5-phosphate + ADP. It functions in the pathway amino-acid biosynthesis; L-arginine biosynthesis; N(2)-acetyl-L-ornithine from L-glutamate: step 2/4. Its function is as follows. Catalyzes the ATP-dependent phosphorylation of N-acetyl-L-glutamate. The protein is Acetylglutamate kinase of Granulibacter bethesdensis (strain ATCC BAA-1260 / CGDNIH1).